The following is a 351-amino-acid chain: Anthranilate phosphoribosyltransferase (351 aa).

Residues Gly-89, 92 to 93 (GD), Thr-97, 99 to 102 (NIST), 117 to 125 (KHGNRSASG), and Ser-129 each bind 5-phospho-alpha-D-ribose 1-diphosphate. Residue Gly-89 participates in anthranilate binding. Ser-101 is a binding site for Mg(2+). Asn-120 is a binding site for anthranilate. Arg-175 serves as a coordination point for anthranilate. Mg(2+)-binding residues include Asp-234 and Glu-235.

The protein belongs to the anthranilate phosphoribosyltransferase family. In terms of assembly, homodimer. Mg(2+) serves as cofactor.

It catalyses the reaction N-(5-phospho-beta-D-ribosyl)anthranilate + diphosphate = 5-phospho-alpha-D-ribose 1-diphosphate + anthranilate. Its pathway is amino-acid biosynthesis; L-tryptophan biosynthesis; L-tryptophan from chorismate: step 2/5. Functionally, catalyzes the transfer of the phosphoribosyl group of 5-phosphorylribose-1-pyrophosphate (PRPP) to anthranilate to yield N-(5'-phosphoribosyl)-anthranilate (PRA). This chain is Anthranilate phosphoribosyltransferase, found in Synechococcus sp. (strain CC9902).